We begin with the raw amino-acid sequence, 1301 residues long: ABC transporter BEA3 (1301 aa).

The disordered stretch occupies residues 1–30 (MGKRTAENSAANGEGEEKHPEIGVDGRPEK). The segment covering 15–30 (GEEKHPEIGVDGRPEK) has biased composition (basic and acidic residues). A run of 4 helical transmembrane segments spans residues 54 to 74 (VGVI…IVFG), 103 to 123 (LYLL…NFAF), 177 to 197 (LGVF…AFIY), and 203 to 223 (LVTF…LPYI). Residues 54–345 (VGVIASIGVG…ISTPLLAVSK (292 aa)) form the ABC transmembrane type-1 1 domain. N-linked (GlcNAc...) asparagine glycosylation occurs at asparagine 229. 2 helical membrane passes run 281–301 (FIAL…GLAF) and 313–333 (INQL…VTAM). Residues 378-667 (IILEDVTFAY…EAGLYYNLVN (290 aa)) form the ABC transporter 1 domain. 413-420 (GPSGSGKS) contacts ATP. The span at 442–454 (VEKPTDKKNNGGK) shows a compositional bias: basic and acidic residues. The segment at 442–461 (VEKPTDKKNNGGKEEDEQEL) is disordered. Asparagine 511 and asparagine 618 each carry an N-linked (GlcNAc...) asparagine glycan. Residues 682–708 (VIAKEERPSSVHEKAHTESTIEEKPLE) are disordered. Residues 735 to 1024 (ALTLFFSACA…ALSFGPNVAQ (290 aa)) form the ABC transmembrane type-1 2 domain. 6 helical membrane passes run 745 to 765 (GAAV…FGYL), 779 to 799 (SLMW…TFFL), 858 to 878 (SVFI…AFAW), 880 to 900 (LALV…YWRM), 961 to 981 (WVSL…AIVL), and 987 to 1007 (LLLS…SVLN). Positions 1060–1296 (IELENIYFKY…RGVYWQMCQS (237 aa)) constitute an ABC transporter 2 domain. An ATP-binding site is contributed by 1094–1101 (GASGSGKS).

This sequence belongs to the ABC transporter superfamily. ABCB family. Multidrug resistance exporter (TC 3.A.1.201) subfamily.

The protein resides in the cell membrane. ABC transporter; part of the gene cluster that mediates the biosynthesis of beauvericin (BEA), a non-ribosomal cyclic hexadepsipeptide that shows antibiotic, antifungal, insecticidal, and cancer cell antiproliferative and antihaptotactic activity. Functions as a regulator of beauvericin production, rather than in BEA transport out of the cell. Beauvericin has low toxicity to the producing fungus and BEA3 does not play a role in detoxification and self-protection of the producing fungus. The sequence is that of ABC transporter BEA3 from Gibberella fujikuroi (strain CBS 195.34 / IMI 58289 / NRRL A-6831) (Bakanae and foot rot disease fungus).